Reading from the N-terminus, the 465-residue chain is UDP-glucose:undecaprenyl-phosphate glucose-1-phosphate transferase (465 aa).

5 helical membrane passes run 23–43 (FSDI…NDYF), 46–66 (LHYV…GGIT), 82–102 (ILIL…VTLF), 105–125 (FDLT…GFVV), and 280–300 (IIVS…IATA).

The protein belongs to the bacterial sugar transferase family.

The protein localises to the cell inner membrane. It catalyses the reaction di-trans,octa-cis-undecaprenyl phosphate + UDP-alpha-D-glucose = alpha-D-glucosyl di-trans,octa-cis-undecaprenyl diphosphate + UMP. It participates in capsule biogenesis; capsule polysaccharide biosynthesis. Functionally, is likely the initiating enzyme for the K2 capsular polysaccharide synthesis. Catalyzes the transfer of the glucose-1-phosphate moiety from UDP-Glc onto the carrier lipid undecaprenyl phosphate (C55-P), forming a phosphoanhydride bond yielding to glucosyl-pyrophosphoryl-undecaprenol (Glc-PP-C55). In Klebsiella pneumoniae, this protein is UDP-glucose:undecaprenyl-phosphate glucose-1-phosphate transferase.